Here is a 255-residue protein sequence, read N- to C-terminus: Uracil-DNA glycosylase (255 aa).

Catalysis depends on D93, which acts as the Proton acceptor.

The protein belongs to the uracil-DNA glycosylase (UDG) superfamily. UNG family.

Its subcellular location is the host nucleus. The catalysed reaction is Hydrolyzes single-stranded DNA or mismatched double-stranded DNA and polynucleotides, releasing free uracil.. Functionally, excises uracil residues from the DNA which can arise as a result of misincorporation of dUMP residues by DNA polymerase or deamination of cytosines. Therefore may reduce deleterious uracil incorporation into the viral genome, particularly in terminally differentiated cells which lack DNA repair enzymes. The chain is Uracil-DNA glycosylase (U81) from Human herpesvirus 6A (strain Uganda-1102) (HHV-6 variant A).